Reading from the N-terminus, the 370-residue chain is Homospermidine synthase 1 (370 aa).

The protein belongs to the deoxyhypusine synthase family. In terms of assembly, homotetramer. NAD(+) is required as a cofactor. In terms of processing, the N-terminus is blocked. Expressed in roots.

It catalyses the reaction putrescine + spermidine = sym-homospermidine + propane-1,3-diamine. Its pathway is alkaloid biosynthesis; pyrrolizidine alkaloid biosynthesis. In terms of biological role, catalyzes the transfer of an aminobutyl unit from spermidine onto putrescine. The resulting polyamine homospermidine is a precursor in the biosynthesis of pyrrolizidine alkaloids. In Senecio vernalis (Spring groundsel), this protein is Homospermidine synthase 1 (HSS1).